A 186-amino-acid polypeptide reads, in one-letter code: UPF0669 protein C6orf120 homolog (186 aa).

A signal peptide spans 1 to 19 (MVPFWAGLLVLSALPQTLG). A glycan (N-linked (GlcNAc...) asparagine) is linked at Asn47. The interval 141–165 (KNSYSSDETPGQPRQSQGPEDTEEE) is disordered. Residues 142–159 (NSYSSDETPGQPRQSQGP) show a composition bias toward polar residues.

This sequence belongs to the UPF0669 family.

It is found in the secreted. In Danio rerio (Zebrafish), this protein is UPF0669 protein C6orf120 homolog.